The sequence spans 263 residues: Hydroxyethylthiazole kinase (263 aa).

Methionine 39 serves as a coordination point for substrate. 2 residues coordinate ATP: lysine 115 and threonine 160. Glycine 187 provides a ligand contact to substrate.

This sequence belongs to the Thz kinase family. Mg(2+) serves as cofactor.

It carries out the reaction 5-(2-hydroxyethyl)-4-methylthiazole + ATP = 4-methyl-5-(2-phosphooxyethyl)-thiazole + ADP + H(+). Its pathway is cofactor biosynthesis; thiamine diphosphate biosynthesis; 4-methyl-5-(2-phosphoethyl)-thiazole from 5-(2-hydroxyethyl)-4-methylthiazole: step 1/1. Catalyzes the phosphorylation of the hydroxyl group of 4-methyl-5-beta-hydroxyethylthiazole (THZ). In Staphylococcus saprophyticus subsp. saprophyticus (strain ATCC 15305 / DSM 20229 / NCIMB 8711 / NCTC 7292 / S-41), this protein is Hydroxyethylthiazole kinase.